A 583-amino-acid chain; its full sequence is Membrane protein insertase YidC (583 aa).

The next 6 helical transmembrane spans lie at 5-25 (SVTG…FMSP), 341-361 (PFAE…VSNY), 362-382 (GLII…LSMA), 427-447 (IGGC…FYVF), 473-493 (FGFA…LMAV), and 520-540 (AMML…YLMF).

The protein belongs to the OXA1/ALB3/YidC family. Type 1 subfamily. As to quaternary structure, interacts with the Sec translocase complex via SecD. Specifically interacts with transmembrane segments of nascent integral membrane proteins during membrane integration.

The protein resides in the cell inner membrane. Its function is as follows. Required for the insertion and/or proper folding and/or complex formation of integral membrane proteins into the membrane. Involved in integration of membrane proteins that insert both dependently and independently of the Sec translocase complex, as well as at least some lipoproteins. Aids folding of multispanning membrane proteins. This Pelodictyon phaeoclathratiforme (strain DSM 5477 / BU-1) protein is Membrane protein insertase YidC.